The primary structure comprises 1133 residues: Lysylphosphatidylglycerol biosynthesis bifunctional protein LysX (1133 aa).

Residues 1 to 626 are phosphatidylglycerol lysyltransferase; it reads MTTVDASPGI…LLHHDGSTPD (626 aa). A run of 7 helical transmembrane segments spans residues 43–63, 82–102, 109–129, 140–160, 177–197, 233–253, and 575–595; these read VPAA…IASV, LFNF…LAAA, IAWL…AVDM, FGEN…VLSY, AVLV…VELF, LNAI…IVLF, and LIPR…LPFS. Residues 627-1133 form a lysine--tRNA ligase region; the sequence is VSGLQTADVD…TLPFPLAKPH (507 aa). Residues aspartate 1045 and glutamate 1052 each contribute to the Mg(2+) site.

The protein in the N-terminal section; belongs to the LPG synthetase family. In the C-terminal section; belongs to the class-II aminoacyl-tRNA synthetase family. It depends on Mg(2+) as a cofactor.

It is found in the cell membrane. The enzyme catalyses tRNA(Lys) + L-lysine + ATP = L-lysyl-tRNA(Lys) + AMP + diphosphate. It catalyses the reaction L-lysyl-tRNA(Lys) + a 1,2-diacyl-sn-glycero-3-phospho-(1'-sn-glycerol) = a 1,2-diacyl-sn-glycero-3-phospho-1'-(3'-O-L-lysyl)-sn-glycerol + tRNA(Lys). Functionally, catalyzes the production of L-lysyl-tRNA(Lys)transfer and the transfer of a lysyl group from L-lysyl-tRNA(Lys) to membrane-bound phosphatidylglycerol (PG), which produces lysylphosphatidylglycerol (LPG), one of the components of the bacterial membrane with a positive net charge. LPG synthesis contributes to the resistance to cationic antimicrobial peptides (CAMPs) and likely protects M.tuberculosis against the CAMPs produced by competiting microorganisms (bacteriocins). In fact, the modification of anionic phosphatidylglycerol with positively charged L-lysine results in repulsion of the peptides. This chain is Lysylphosphatidylglycerol biosynthesis bifunctional protein LysX (lysX), found in Mycobacterium leprae (strain Br4923).